The chain runs to 291 residues: MADFSPHHSLLLKATAAGAAIATTNDPNISSFFLYNHSHGSQAPQPANAAAAAIVEDASLESSVSAVLDTSPSVDRKRKAAEDSAHSKDSCKDGKSRRGKKASKEVEEKSTTEDEPPKGYIHVRARRGQATDSHSLAERVRRERISERMRMLQALVPGCDKVTGKALILDEIINYVQSLQNQVEFLSMRIASMSPVLYGFGMDSDGLHDQKIGGMFQEALAMPNPVLNQSSPAPSQAIMDTTSTTSYSLQSQHGAISFSQDNGSYLMQAVGEPRQQEMLNQLVFNNMCSFQ.

A disordered region spans residues 65-120; sequence SAVLDTSPSVDRKRKAAEDSAHSKDSCKDGKSRRGKKASKEVEEKSTTEDEPPKGY. Positions 80–117 are enriched in basic and acidic residues; the sequence is AAEDSAHSKDSCKDGKSRRGKKASKEVEEKSTTEDEPP. The Nuclear localization signal signature appears at 125 to 132; sequence ARRGQATD. The tract at residues 129 to 142 is basic motif; degenerate; sequence QATDSHSLAERVRR. Positions 129 to 179 constitute a bHLH domain; the sequence is QATDSHSLAERVRRERISERMRMLQALVPGCDKVTGKALILDEIINYVQSL. The interval 143–179 is helix-loop-helix motif; sequence ERISERMRMLQALVPGCDKVTGKALILDEIINYVQSL.

It belongs to the bHLH protein family. In terms of assembly, homodimer. Interacts with IBH1, BC1 and LO9-177.

The protein resides in the nucleus. Together with BCL2, positive regulator of cell elongation at least partially through increased gibberellic acid (GA) biosynthesis. This chain is Basic helix-loop-helix protein 80, found in Oryza sativa subsp. indica (Rice).